Here is a 289-residue protein sequence, read N- to C-terminus: 3-methyl-2-oxobutanoate hydroxymethyltransferase (289 aa).

Residues 1-15 (MSTTFQLDTSTSRAN) are compositionally biased toward polar residues. The tract at residues 1 to 20 (MSTTFQLDTSTSRANPTPAP) is disordered. Residues aspartate 67 and aspartate 106 each contribute to the Mg(2+) site. 3-methyl-2-oxobutanoate is bound by residues 67–68 (DS), aspartate 106, and lysine 136. Glutamate 138 contributes to the Mg(2+) binding site. The active-site Proton acceptor is the glutamate 205.

This sequence belongs to the PanB family. Homodecamer; pentamer of dimers. Mg(2+) is required as a cofactor.

It localises to the cytoplasm. The catalysed reaction is 3-methyl-2-oxobutanoate + (6R)-5,10-methylene-5,6,7,8-tetrahydrofolate + H2O = 2-dehydropantoate + (6S)-5,6,7,8-tetrahydrofolate. It functions in the pathway cofactor biosynthesis; (R)-pantothenate biosynthesis; (R)-pantoate from 3-methyl-2-oxobutanoate: step 1/2. In terms of biological role, catalyzes the reversible reaction in which hydroxymethyl group from 5,10-methylenetetrahydrofolate is transferred onto alpha-ketoisovalerate to form ketopantoate. The chain is 3-methyl-2-oxobutanoate hydroxymethyltransferase from Novosphingobium aromaticivorans (strain ATCC 700278 / DSM 12444 / CCUG 56034 / CIP 105152 / NBRC 16084 / F199).